Here is a 202-residue protein sequence, read N- to C-terminus: Nascent polypeptide-associated complex subunit alpha (202 aa).

Residues 1–19 (MADPRVEELPDEEVPKTNV) are compositionally biased toward basic and acidic residues. The disordered stretch occupies residues 1–44 (MADPRVEELPDEEVPKTNVEDAGSDSESEAGEEPTIPGGAAVAV). Positions 22–32 (AGSDSESEAGE) are enriched in acidic residues. The NAC-A/B domain maps to 46–111 (SRNEKKARKA…AKIEDLNAQA (66 aa)). The disordered stretch occupies residues 118 to 165 (QLAAQEAAQEHAGHEHEDILGKAKEPEAEKKEAEEDDGEEVDESGLEA). Over residues 125–150 (AQEHAGHEHEDILGKAKEPEAEKKEA) the composition is skewed to basic and acidic residues. Residues 151–162 (EEDDGEEVDESG) are compositionally biased toward acidic residues. Residues 163–202 (LEAKDIELVMAQANVSRKKAVKALRENDNDIVNSIMALSI) form the UBA domain.

This sequence belongs to the NAC-alpha family. In terms of assembly, part of the nascent polypeptide-associated complex (NAC), consisting of egd2 and egd1. NAC associates with ribosomes via egd1.

Its subcellular location is the cytoplasm. The protein localises to the nucleus. In terms of biological role, component of the nascent polypeptide-associated complex (NAC), a dynamic component of the ribosomal exit tunnel, protecting the emerging polypeptides from interaction with other cytoplasmic proteins to ensure appropriate nascent protein targeting. The NAC complex also promotes mitochondrial protein import by enhancing productive ribosome interactions with the outer mitochondrial membrane and blocks the inappropriate interaction of ribosomes translating non-secretory nascent polypeptides with translocation sites in the membrane of the endoplasmic reticulum. Egd2 may also be involved in transcription regulation. The polypeptide is Nascent polypeptide-associated complex subunit alpha (egd2) (Aspergillus terreus (strain NIH 2624 / FGSC A1156)).